Here is a 474-residue protein sequence, read N- to C-terminus: Probable glycine dehydrogenase (decarboxylating) subunit 2 (474 aa).

Position 262 is an N6-(pyridoxal phosphate)lysine (K262).

This sequence belongs to the GcvP family. C-terminal subunit subfamily. The glycine cleavage system is composed of four proteins: P, T, L and H. In this organism, the P 'protein' is a heterodimer of two subunits. The cofactor is pyridoxal 5'-phosphate.

It catalyses the reaction N(6)-[(R)-lipoyl]-L-lysyl-[glycine-cleavage complex H protein] + glycine + H(+) = N(6)-[(R)-S(8)-aminomethyldihydrolipoyl]-L-lysyl-[glycine-cleavage complex H protein] + CO2. Its function is as follows. The glycine cleavage system catalyzes the degradation of glycine. The P protein binds the alpha-amino group of glycine through its pyridoxal phosphate cofactor; CO(2) is released and the remaining methylamine moiety is then transferred to the lipoamide cofactor of the H protein. The sequence is that of Probable glycine dehydrogenase (decarboxylating) subunit 2 from Thermotoga maritima (strain ATCC 43589 / DSM 3109 / JCM 10099 / NBRC 100826 / MSB8).